A 234-amino-acid polypeptide reads, in one-letter code: Small ribosomal subunit protein uS2c (234 aa).

It belongs to the universal ribosomal protein uS2 family.

The protein localises to the plastid. It is found in the chloroplast. The chain is Small ribosomal subunit protein uS2c (rps2) from Pinus thunbergii (Japanese black pine).